Consider the following 207-residue polypeptide: Large ribosomal subunit protein uL4 (207 aa).

The disordered stretch occupies residues 49–78; sequence HAVKNRSAVSGGGRKPWRQKGTGRARQGSI.

Belongs to the universal ribosomal protein uL4 family. Part of the 50S ribosomal subunit.

Its function is as follows. One of the primary rRNA binding proteins, this protein initially binds near the 5'-end of the 23S rRNA. It is important during the early stages of 50S assembly. It makes multiple contacts with different domains of the 23S rRNA in the assembled 50S subunit and ribosome. Functionally, forms part of the polypeptide exit tunnel. The chain is Large ribosomal subunit protein uL4 (rplD) from Streptococcus pyogenes serotype M1.